Consider the following 227-residue polypeptide: Glutathione S-transferase U13 (227 aa).

The region spanning 5 to 86 is the GST N-terminal domain; the sequence is DTVKLIGSWS…YVDEAWPSVP (82 aa). Residues 15–16, 43–44, 57–58, and 70–71 contribute to the glutathione site; these read SP, EK, KV, and ES. A GST C-terminal domain is found at 92–224; sequence DAYDRASARF…EVVAFAKQKF (133 aa). Thr-158 carries the phosphothreonine modification.

Belongs to the GST superfamily. Tau family.

It is found in the cytoplasm. It localises to the cytosol. It carries out the reaction RX + glutathione = an S-substituted glutathione + a halide anion + H(+). Its function is as follows. In vitro, possesses glutathione S-transferase activity toward 1-chloro-2,4-dinitrobenzene (CDNB) and benzyl isothiocyanate (BITC). May be involved in the conjugation of reduced glutathione to a wide number of exogenous and endogenous hydrophobic electrophiles and have a detoxification role against certain herbicides. This chain is Glutathione S-transferase U13 (GSTU13), found in Arabidopsis thaliana (Mouse-ear cress).